The primary structure comprises 282 residues: 2-dehydro-3-deoxyphosphooctonate aldolase (282 aa).

This sequence belongs to the KdsA family.

The protein resides in the cytoplasm. The catalysed reaction is D-arabinose 5-phosphate + phosphoenolpyruvate + H2O = 3-deoxy-alpha-D-manno-2-octulosonate-8-phosphate + phosphate. It functions in the pathway carbohydrate biosynthesis; 3-deoxy-D-manno-octulosonate biosynthesis; 3-deoxy-D-manno-octulosonate from D-ribulose 5-phosphate: step 2/3. Its pathway is bacterial outer membrane biogenesis; lipopolysaccharide biosynthesis. This chain is 2-dehydro-3-deoxyphosphooctonate aldolase, found in Shewanella sp. (strain ANA-3).